A 785-amino-acid polypeptide reads, in one-letter code: MQFSEQWLRSWVNPALNTEQLSDLLTMAGLEVEETVAAAPAFSGVVIAEVKECVKHENADRLRVTKVDAGTGELIQIVCGAPNVAVGVRVPCALPGAVLPGEFKIKPTKMRGVESNGMLCSGKELGVPEDVDGLMLLPADAPVGQSIRDYLGLDDQLFTLKITPNRADSLSIRGIAREVAALTGAELKPVAIEPVAPSIDDVRPVKIESRQACGRYLGRVVKGVNAAAPTPAWMRRRLERSGLRSISAIVDITNYILLEQGQPMHAFDLAKIDGGITVRQARAGESLLCLNEKTVELQPKHLVIADDAKPLAMGGIMGGEHSGVTVASHDIFLESAFFAPEAIAGKARELGFGSDSSYRYERGVDFALQRDAIERATRLVLEICGGQAGPVVEEVAELPKRQAVQLRAARVAKVLGVAMSAERIGDILSRLSLSYTLADEVFTVQAPSFRFDIEIEEDLIEEVARVYGYNNIPADAPRSGMRMLAQPEDKRPVDQLRHLLAGRDYQEVVSYAFVDERWERDFAGNDNPIRLQNPIASQMSVMRSTLIGGLVDVLAGNINRKQPRVRLFEVARVFLRGGNGFDQPEKVAGLVWGPRLAEQWAAKSERVDFFDVKADVEALLHPIKAEYRKAAHPAFHPGRCAEVRVDGKAVGVIGELHPQWVQAYGLINAPVLFELDLAAAIARGRIKAQPVSKFQPVRRDLALLVDEAVTVAQLLSAFAAKRAEIVADIALFDVYRGKGVAEGKKSLAFSVLMQDNSRTLTDEDVEPAMQALLEAASELGAQLRV.

In terms of domain architecture, tRNA-binding spans 39–148 (APAFSGVVIA…ADAPVGQSIR (110 aa)). A B5 domain is found at 399–474 (PKRQAVQLRA…RVYGYNNIPA (76 aa)). Positions 452, 458, 461, and 462 each coordinate Mg(2+). Positions 692–784 (SKFQPVRRDL…AASELGAQLR (93 aa)) constitute an FDX-ACB domain.

Belongs to the phenylalanyl-tRNA synthetase beta subunit family. Type 1 subfamily. As to quaternary structure, tetramer of two alpha and two beta subunits. The cofactor is Mg(2+).

The protein resides in the cytoplasm. It carries out the reaction tRNA(Phe) + L-phenylalanine + ATP = L-phenylalanyl-tRNA(Phe) + AMP + diphosphate + H(+). This is Phenylalanine--tRNA ligase beta subunit from Chromobacterium violaceum (strain ATCC 12472 / DSM 30191 / JCM 1249 / CCUG 213 / NBRC 12614 / NCIMB 9131 / NCTC 9757 / MK).